The following is a 215-amino-acid chain: Pyrophosphatase PpaX (215 aa).

The active-site Nucleophile is the Asp-9.

The protein belongs to the HAD-like hydrolase superfamily. PpaX family. Requires Mg(2+) as cofactor.

The catalysed reaction is diphosphate + H2O = 2 phosphate + H(+). In terms of biological role, hydrolyzes pyrophosphate formed during P-Ser-HPr dephosphorylation by HPrK/P. Might play a role in controlling the intracellular pyrophosphate pool. This Anoxybacillus flavithermus (strain DSM 21510 / WK1) protein is Pyrophosphatase PpaX.